The primary structure comprises 131 residues: Transcriptional activator protein (131 aa).

The short motif at 13–28 is the Nuclear localization signal element; that stretch reads KAQHRIAKKRAVRRRR. A zinc finger lies at 33–52; sequence CGCSIYIHINCAKDGNGFTH. The interval 78–131 is disordered; sequence DVQXGGSTLHAHKDIPHTNPVQPQPEESTKSSQSVPELPSLDGIDSSFWDDIFE. The tract at residues 117-131 is transactivation; the sequence is SLDGIDSSFWDDIFE.

The protein belongs to the geminiviridae transcriptional activator protein family. As to quaternary structure, monomer. Homodimer. Homooligomer. Self-interaction correlates with nuclear localization and efficient activation of transcription. Monomers suppress local silencing by interacting with and inactivating host adenosine kinase 2 (ADK2) in the cytoplasm. Interacts with and inhibits host SNF1 kinase. Binds to ssDNA. Phosphorylated.

Its subcellular location is the host nucleus. It localises to the host cytoplasm. Functionally, strong activator of the late viral genes promoters. Enhances the expression of the capsid protein and nuclear shuttle protein. Acts as a suppressor of RNA-mediated gene silencing, also known as post-transcriptional gene silencing (PTGS), a mechanism of plant viral defense that limits the accumulation of viral RNAs. Suppresses the host RNA silencing by inhibiting adenosine kinase 2 (ADK2), a kinase involved in a general methylation pathway. Also suppresses the host basal defense by interacting with and inhibiting SNF1 kinase, a key regulator of cell metabolism implicated in innate antiviral defense. Determines pathogenicity. The polypeptide is Transcriptional activator protein (Cucurbita moschata (Winter crookneck squash)).